Consider the following 94-residue polypeptide: Small ribosomal subunit protein uS19 (94 aa).

It belongs to the universal ribosomal protein uS19 family.

In terms of biological role, protein S19 forms a complex with S13 that binds strongly to the 16S ribosomal RNA. The sequence is that of Small ribosomal subunit protein uS19 from Buchnera aphidicola subsp. Cinara cedri (strain Cc).